A 919-amino-acid chain; its full sequence is GPI ethanolamine phosphate transferase 1 (919 aa).

At 1-8 the chain is on the cytoplasmic side; it reads MWSRHRLY. A helical membrane pass occupies residues 9–29; sequence FIVAGVLFHLFYLWSIFDIYF. Residues 30 to 456 are Lumenal-facing; that stretch reads VSPLVHGMKQ…TTYNWRFIRT (427 aa). Asn-138, Asn-196, Asn-201, Asn-285, and Asn-311 each carry an N-linked (GlcNAc...) asparagine glycan. A helical membrane pass occupies residues 457 to 477; the sequence is IVTLGFLGWIVYSFSIFLRLF. Topologically, residues 478–487 are cytoplasmic; sequence ILNRDYNSHK. A helical transmembrane segment spans residues 488–508; it reads SLLNYFIFGSLTIILNYVLYY. The Lumenal portion of the chain corresponds to 509–510; sequence QK. The chain crosses the membrane as a helical span at residues 511-531; it reads APFNYYMYLFFPLIFWSEIFT. The Cytoplasmic segment spans residues 532 to 558; it reads DRVVLDDGVKEFLKGISIPKRIILVSA. The chain crosses the membrane as a helical span at residues 559–579; it reads IILVYESIVYAFFDRWIFSLI. The Lumenal portion of the chain corresponds to 580–598; that stretch reads FNMLSFYPLICGYRDWKRN. A helical membrane pass occupies residues 599–619; it reads TLWFITGAAISVFTLLDAVKI. Residue Glu-620 is a topological domain, cytoplasmic. A helical transmembrane segment spans residues 621-641; the sequence is SLTQINIASGLIVLTALSGFL. The Lumenal segment spans residues 642 to 653; that stretch reads HLRKQLNSYTTT. The helical transmembrane segment at 654 to 674 threads the bilayer; it reads VFICQILLVILMVLATNKSIV. The Cytoplasmic segment spans residues 675 to 686; that stretch reads SLQNRTGLPRDA. The helical transmembrane segment at 687–707 threads the bilayer; that stretch reads QVAGWVILVVSLLLMPLIHYM. At 708–718 the chain is on the lumenal side; that stretch reads KPNNNYKVRML. A helical membrane pass occupies residues 719–739; the sequence is IIFLTFAPTFIILTISFESFF. Over 740 to 773 the chain is Cytoplasmic; sequence YLVFSAYIVQWIEIESKLKEQTPNTSHYKQLIRV. A helical membrane pass occupies residues 774–794; that stretch reads TIIGFFLLQNAFFGTGNVASI. Residues 795 to 815 are Lumenal-facing; the sequence is SSFSLDSVYRLMPIFDPFPMG. A helical transmembrane segment spans residues 816–836; sequence ALLVIKLIIPYIILSAGLGIL. Residues 837–845 are Cytoplasmic-facing; the sequence is NLKLHIKDY. Residues 846-866 form a helical membrane-spanning segment; it reads TISTLIISTSDILSLNFFYLL. The Lumenal portion of the chain corresponds to 867-882; that stretch reads KTEGSWLDIGITISNY. The chain crosses the membrane as a helical span at residues 883–903; that stretch reads CLAILSSLFMLILEIVAHVVL. The Cytoplasmic segment spans residues 904-919; the sequence is KNVQLSKPVIASKKTN.

This sequence belongs to the PIGG/PIGN/PIGO family. PIGN subfamily.

The protein resides in the endoplasmic reticulum membrane. Its pathway is glycolipid biosynthesis; glycosylphosphatidylinositol-anchor biosynthesis. In terms of biological role, ethanolamine phosphate transferase involved in glycosylphosphatidylinositol-anchor biosynthesis. Transfers ethanolamine phosphate to the first alpha-1,4-linked mannose of the glycosylphosphatidylinositol precursor of GPI-anchor. The chain is GPI ethanolamine phosphate transferase 1 (MCD4) from Kluyveromyces lactis (strain ATCC 8585 / CBS 2359 / DSM 70799 / NBRC 1267 / NRRL Y-1140 / WM37) (Yeast).